Here is a 242-residue protein sequence, read N- to C-terminus: 3-dehydroquinate dehydratase (242 aa).

Residues 39–41 and Arg73 contribute to the 3-dehydroquinate site; that span reads EVR. His135 (proton donor/acceptor) is an active-site residue. Lys162 acts as the Schiff-base intermediate with substrate in catalysis. 3-dehydroquinate-binding residues include Arg203 and Gln228.

This sequence belongs to the type-I 3-dehydroquinase family. Homodimer.

It carries out the reaction 3-dehydroquinate = 3-dehydroshikimate + H2O. It functions in the pathway metabolic intermediate biosynthesis; chorismate biosynthesis; chorismate from D-erythrose 4-phosphate and phosphoenolpyruvate: step 3/7. In terms of biological role, involved in the third step of the chorismate pathway, which leads to the biosynthesis of aromatic amino acids. Catalyzes the cis-dehydration of 3-dehydroquinate (DHQ) and introduces the first double bond of the aromatic ring to yield 3-dehydroshikimate. This Methanosarcina acetivorans (strain ATCC 35395 / DSM 2834 / JCM 12185 / C2A) protein is 3-dehydroquinate dehydratase.